The sequence spans 288 residues: 4-diphosphocytidyl-2-C-methyl-D-erythritol kinase (288 aa).

Residue Lys-11 is part of the active site. Residue 93–103 participates in ATP binding; sequence PFGAGLGGGSS. Asp-135 is a catalytic residue.

This sequence belongs to the GHMP kinase family. IspE subfamily.

It carries out the reaction 4-CDP-2-C-methyl-D-erythritol + ATP = 4-CDP-2-C-methyl-D-erythritol 2-phosphate + ADP + H(+). It functions in the pathway isoprenoid biosynthesis; isopentenyl diphosphate biosynthesis via DXP pathway; isopentenyl diphosphate from 1-deoxy-D-xylulose 5-phosphate: step 3/6. Catalyzes the phosphorylation of the position 2 hydroxy group of 4-diphosphocytidyl-2C-methyl-D-erythritol. This is 4-diphosphocytidyl-2-C-methyl-D-erythritol kinase from Chlorobium limicola (strain DSM 245 / NBRC 103803 / 6330).